Consider the following 200-residue polypeptide: Holliday junction branch migration complex subunit RuvA (200 aa).

The domain I stretch occupies residues Met1 to Ala64. Residues Thr65–Ser143 are domain II. Residues Ala144–Val148 form a flexible linker region. The interval Ser149–Arg200 is domain III.

This sequence belongs to the RuvA family. Homotetramer. Forms an RuvA(8)-RuvB(12)-Holliday junction (HJ) complex. HJ DNA is sandwiched between 2 RuvA tetramers; dsDNA enters through RuvA and exits via RuvB. An RuvB hexamer assembles on each DNA strand where it exits the tetramer. Each RuvB hexamer is contacted by two RuvA subunits (via domain III) on 2 adjacent RuvB subunits; this complex drives branch migration. In the full resolvosome a probable DNA-RuvA(4)-RuvB(12)-RuvC(2) complex forms which resolves the HJ.

Its subcellular location is the cytoplasm. In terms of biological role, the RuvA-RuvB-RuvC complex processes Holliday junction (HJ) DNA during genetic recombination and DNA repair, while the RuvA-RuvB complex plays an important role in the rescue of blocked DNA replication forks via replication fork reversal (RFR). RuvA specifically binds to HJ cruciform DNA, conferring on it an open structure. The RuvB hexamer acts as an ATP-dependent pump, pulling dsDNA into and through the RuvAB complex. HJ branch migration allows RuvC to scan DNA until it finds its consensus sequence, where it cleaves and resolves the cruciform DNA. The chain is Holliday junction branch migration complex subunit RuvA from Gluconobacter oxydans (strain 621H) (Gluconobacter suboxydans).